Here is a 660-residue protein sequence, read N- to C-terminus: Bifunctional polymyxin resistance protein ArnA (660 aa).

Residues 1–304 (MKTVVFAYHD…TLGLVQGSRL (304 aa)) are formyltransferase ArnAFT. 86-88 (HLI) contributes to the (6R)-10-formyltetrahydrofolate binding site. The active-site Proton donor; for formyltransferase activity is histidine 104. Residues arginine 114 and 136-140 (VKRAD) each bind (6R)-10-formyltetrahydrofolate. The tract at residues 314–660 (RRTRVLILGV…RTVDLTDKPS (347 aa)) is dehydrogenase ArnADH. Residues aspartate 347 and 368 to 369 (DI) contribute to the NAD(+) site. UDP-alpha-D-glucuronate is bound by residues alanine 393, tyrosine 398, and 432–433 (TS). The Proton acceptor; for decarboxylase activity role is filled by glutamate 434. Residues arginine 460, asparagine 492, 526–535 (KLIDGGKQKR), and tyrosine 613 contribute to the UDP-alpha-D-glucuronate site. The Proton donor; for decarboxylase activity role is filled by arginine 619.

The protein in the N-terminal section; belongs to the Fmt family. UDP-L-Ara4N formyltransferase subfamily. It in the C-terminal section; belongs to the NAD(P)-dependent epimerase/dehydratase family. UDP-glucuronic acid decarboxylase subfamily. As to quaternary structure, homohexamer, formed by a dimer of trimers.

It carries out the reaction UDP-alpha-D-glucuronate + NAD(+) = UDP-beta-L-threo-pentopyranos-4-ulose + CO2 + NADH. The catalysed reaction is UDP-4-amino-4-deoxy-beta-L-arabinose + (6R)-10-formyltetrahydrofolate = UDP-4-deoxy-4-formamido-beta-L-arabinose + (6S)-5,6,7,8-tetrahydrofolate + H(+). The protein operates within nucleotide-sugar biosynthesis; UDP-4-deoxy-4-formamido-beta-L-arabinose biosynthesis; UDP-4-deoxy-4-formamido-beta-L-arabinose from UDP-alpha-D-glucuronate: step 1/3. It functions in the pathway nucleotide-sugar biosynthesis; UDP-4-deoxy-4-formamido-beta-L-arabinose biosynthesis; UDP-4-deoxy-4-formamido-beta-L-arabinose from UDP-alpha-D-glucuronate: step 3/3. It participates in bacterial outer membrane biogenesis; lipopolysaccharide biosynthesis. In terms of biological role, bifunctional enzyme that catalyzes the oxidative decarboxylation of UDP-glucuronic acid (UDP-GlcUA) to UDP-4-keto-arabinose (UDP-Ara4O) and the addition of a formyl group to UDP-4-amino-4-deoxy-L-arabinose (UDP-L-Ara4N) to form UDP-L-4-formamido-arabinose (UDP-L-Ara4FN). The modified arabinose is attached to lipid A and is required for resistance to polymyxin and cationic antimicrobial peptides. The chain is Bifunctional polymyxin resistance protein ArnA from Shigella boydii serotype 4 (strain Sb227).